A 459-amino-acid polypeptide reads, in one-letter code: Cysteine--tRNA ligase (459 aa).

Cys-28 serves as a coordination point for Zn(2+). A 'HIGH' region motif is present at residues Ile-30–His-40. 3 residues coordinate Zn(2+): Cys-209, His-234, and Glu-238. The 'KMSKS' region motif lies at Lys-266 to Ser-270. Lys-269 is a binding site for ATP.

It belongs to the class-I aminoacyl-tRNA synthetase family. In terms of assembly, monomer. Zn(2+) is required as a cofactor.

It localises to the cytoplasm. The catalysed reaction is tRNA(Cys) + L-cysteine + ATP = L-cysteinyl-tRNA(Cys) + AMP + diphosphate. The chain is Cysteine--tRNA ligase from Shewanella denitrificans (strain OS217 / ATCC BAA-1090 / DSM 15013).